We begin with the raw amino-acid sequence, 531 residues long: Methyl-accepting chemotaxis protein McpN (531 aa).

The Cytoplasmic portion of the chain corresponds to 1-24; the sequence is MNESVARVFDRILRGLGLKTLNAQ. The helical transmembrane segment at 25 to 45 threads the bilayer; the sequence is FLLSYALMFGLAACASVALYL. The Periplasmic portion of the chain corresponds to 46 to 174; that stretch reads SMSISPETIN…LMSARADSVQ (129 aa). The pilJ-type stretch occupies residues 52–140; that stretch reads ETINVAGAQR…AMLDQVAQPA (89 aa). The N-box signature appears at 54 to 65; sequence INVAGAQRMLSQ. Arg61 is a nitrate binding site. Residues 175 to 195 form a helical membrane-spanning segment; sequence HTQMWIAFGCLLAILVLVVLG. Residues 196 to 531 are Cytoplasmic-facing; the sequence is RQFGLAPLMR…LRVVLGRFRT (336 aa). The HAMP domain maps to 201–254; the sequence is APLMRQLRGLEVALTEVGAANFTHALAAGHADNEIGRIVAGYERMRQDVSGLLA. The Methyl-accepting transducer domain occupies 259 to 495; that stretch reads SAAETDKDVA…DIDRNITNVS (237 aa).

Belongs to the methyl-accepting chemotaxis (MCP) protein family. As to quaternary structure, ligand free ligand-binding domain (LBD) is present in a monomer-dimer equilibrium. Nitrate binding to the periplasmic LBD stabilizes the homodimer.

The protein localises to the cell inner membrane. Functionally, chemotactic-signal transducers respond to changes in the concentration of attractants and repellents in the environment, transduce a signal from the outside to the inside of the cell, and facilitate sensory adaptation through the variation of the level of methylation. McpN is a chemoreceptor that recognizes specifically nitrate and mediates chemoattraction. Binds nitrate specifically and shows no affinity for other ligands such as nitrite. McpN-mediated taxis occurs only under nitrate starvation conditions. This is Methyl-accepting chemotaxis protein McpN from Pseudomonas aeruginosa (strain ATCC 15692 / DSM 22644 / CIP 104116 / JCM 14847 / LMG 12228 / 1C / PRS 101 / PAO1).